Reading from the N-terminus, the 406-residue chain is Cysteine desulfurase (406 aa).

N6-(pyridoxal phosphate)lysine is present on K226. C364 acts as the Cysteine persulfide intermediate in catalysis.

The protein belongs to the class-V pyridoxal-phosphate-dependent aminotransferase family. Csd subfamily. In terms of assembly, homodimer. Interacts with SufE and the SufBCD complex composed of SufB, SufC and SufD. The interaction with SufE is required to mediate the direct transfer of the sulfur atom from the S-sulfanylcysteine. Pyridoxal 5'-phosphate is required as a cofactor.

It is found in the cytoplasm. The catalysed reaction is (sulfur carrier)-H + L-cysteine = (sulfur carrier)-SH + L-alanine. The enzyme catalyses L-selenocysteine + AH2 = hydrogenselenide + L-alanine + A + H(+). It functions in the pathway cofactor biosynthesis; iron-sulfur cluster biosynthesis. In terms of biological role, cysteine desulfurases mobilize the sulfur from L-cysteine to yield L-alanine, an essential step in sulfur metabolism for biosynthesis of a variety of sulfur-containing biomolecules. Component of the suf operon, which is activated and required under specific conditions such as oxidative stress and iron limitation. Acts as a potent selenocysteine lyase in vitro, that mobilizes selenium from L-selenocysteine. Selenocysteine lyase activity is however unsure in vivo. This is Cysteine desulfurase from Enterobacter sp. (strain 638).